The sequence spans 392 residues: Zinc finger protein ham-2 (392 aa).

2 C2H2-type zinc fingers span residues F16 to H39 and Y43 to H66. The C2H2-type 3; degenerate zinc-finger motif lies at F72–L95. Disordered stretches follow at residues L106–P130 and H278–E303. Polar residues predominate over residues V112–R123. The span at S289 to E303 shows a compositional bias: low complexity.

It is found in the nucleus. Probable transcription factor that acts downstream of egl-15, to promote migration of the HSN motor neurons from the tail to the gonad primordium during HSN cell differentiation. In Caenorhabditis elegans, this protein is Zinc finger protein ham-2.